The following is a 614-amino-acid chain: Fem-3 mRNA-binding factor 1 (614 aa).

The span at 1 to 24 (MDQSKMRYTNQFRKTPQKPTSTEV) shows a compositional bias: polar residues. A disordered region spans residues 1–34 (MDQSKMRYTNQFRKTPQKPTSTEVGNHHTPAHSP). The PUM-HD domain occupies 160-564 (TRSNNVLPTW…KMIETLAHLR (405 aa)). Pumilio repeat units follow at residues 185–223 (EVLD…QLFE), 224–263 (QVIG…NIKR), 269–305 (NFIS…KLVQ), 306–342 (ALPR…EFIV), 343–382 (DFVA…DLTS), 398–434 (SVTN…CIIE), 436–471 (CLMR…EMMD), and 483–519 (TGKD…RQTK). Residues 283 to 614 (FACRVIQSSL…NLRLMRTFSP (332 aa)) are binding to gld-3 isoform A.

In terms of assembly, interacts (via C-terminus) with gld-3 isoform A in an RNA-independent manner. Expressed specifically in the germline (at protein level).

The protein resides in the cytoplasm. Its function is as follows. RNA-binding protein that binds to the consensus sequence 5'-UGUGCCAUA-3' in mRNA 3'-UTRs. Involved in the control of stem cells and sex determination in the C.elegans hermaphrodite germline. May also play a role in the hermaphrodite germline proliferation and oogenesis. Binds specifically to the regulatory region of fem-3 3'-UTR and mediates the sperm/oocyte switch. Negatively regulates gld-3 expression, possibly by directly binding to two sites within the 3'-UTR of gld-3 isoform b. In association with the cye-1/cdk-2 complex, negatively regulates gld-1 expression in the distal germline cells of the mitotic zone. By binding to the 3'-UTR, represses phosphatase lip-1 expression in the distal part of the germline mitotic zone. Suppresses germline tumor formation by preventing the dedifferentiation of secondary spermatocytes. The sequence is that of Fem-3 mRNA-binding factor 1 (fbf-1) from Caenorhabditis elegans.